A 432-amino-acid chain; its full sequence is Polypyrimidine tract-binding protein homolog 3 (432 aa).

RRM domains follow at residues 6-80 (KVVH…FSSH), 98-187 (NRIL…YNND), 245-319 (CTVL…FSKH), and 355-429 (KMIH…FSQL).

Its subcellular location is the nucleus. Its function is as follows. Plays a role in pre-mRNA splicing. Binds to the polypyrimidine tract of introns. May promote the binding of U2 snRNP to pre-mRNA. The polypeptide is Polypyrimidine tract-binding protein homolog 3 (Arabidopsis thaliana (Mouse-ear cress)).